The chain runs to 370 residues: tRNA N(3)-cytidine methyltransferase METTL2 (370 aa).

S-adenosyl-L-methionine is bound by residues Trp-72, Tyr-76, Gly-181, Asp-206, Asp-232, Leu-233, and Ile-253.

The protein belongs to the methyltransferase superfamily. METL family. In terms of assembly, monomer.

Its subcellular location is the cytoplasm. It catalyses the reaction cytidine(32) in tRNA(Thr) + S-adenosyl-L-methionine = N(3)-methylcytidine(32) in tRNA(Thr) + S-adenosyl-L-homocysteine + H(+). The enzyme catalyses cytidine(32) in tRNA(Arg)(CCU) + S-adenosyl-L-methionine = N(3)-methylcytidine(32) in tRNA(Arg)(CCU) + S-adenosyl-L-homocysteine + H(+). Its function is as follows. S-adenosyl-L-methionine-dependent methyltransferase that mediates N(3)-methylcytidine modification of residue 32 of the tRNA anticodon loop of tRNA(Thr)(UGU) and tRNA(Arg)(CCU). N(3)-methylcytidine methylation by METTL2 requires the N6-threonylcarbamoylation of tRNA (t6A37) by the EKC/KEOPS complex as prerequisite. The protein is tRNA N(3)-cytidine methyltransferase METTL2 (METTL2) of Gallus gallus (Chicken).